A 122-amino-acid chain; its full sequence is Large ribosomal subunit protein bL12 (122 aa).

It belongs to the bacterial ribosomal protein bL12 family. As to quaternary structure, homodimer. Part of the ribosomal stalk of the 50S ribosomal subunit. Forms a multimeric L10(L12)X complex, where L10 forms an elongated spine to which 2 to 4 L12 dimers bind in a sequential fashion. Binds GTP-bound translation factors.

Functionally, forms part of the ribosomal stalk which helps the ribosome interact with GTP-bound translation factors. Is thus essential for accurate translation. The polypeptide is Large ribosomal subunit protein bL12 (Yersinia enterocolitica serotype O:8 / biotype 1B (strain NCTC 13174 / 8081)).